The sequence spans 144 residues: Mercuric transport protein MerC (144 aa).

Topologically, residues 1–21 (MSAITRIIDKIGIVGTIVGSF) are cytoplasmic. The chain crosses the membrane as a helical span at residues 22 to 42 (SCAMCFPAAASLGAAIGLGFL). Cys-23 and Cys-26 together coordinate Hg(2+). Over 43–46 (SQWE) the chain is Periplasmic. The helical transmembrane segment at 47-67 (GLFVQWLIPIFASVALLATLA) threads the bilayer. Over 68–78 (GWFSHRQWQRT) the chain is Cytoplasmic. The chain crosses the membrane as a helical span at residues 79–99 (LLGSIGPVLALVGVFGLTHHF). The Periplasmic segment spans residues 100-103 (LDKD). Residues 104 to 124 (LARVIFYTGLVVMFLVSIWDM) form a helical membrane-spanning segment. The Cytoplasmic segment spans residues 125-144 (VNPANRRCATDGCETPAPRS).

As to quaternary structure, monomer.

Its subcellular location is the cell inner membrane. Inhibited by the thiol-modifying reagent N-ethylmaleimide (NEM). Its function is as follows. Involved in mercuric ion uptake. This chain is Mercuric transport protein MerC, found in Acidithiobacillus ferrooxidans (Thiobacillus ferrooxidans).